Consider the following 278-residue polypeptide: Beta-lactamase-like protein str5 (278 aa).

Residues 20-37 (VFVLAALLSATFAFFTHT) traverse the membrane as a helical segment. An N-linked (GlcNAc...) asparagine glycan is attached at asparagine 112.

It belongs to the beta-lactamase family.

It localises to the membrane. The protein operates within mycotoxin biosynthesis. Functionally, beta-lactamase-like protein; part of the gene cluster that mediates the biosynthesis of strobilurin A, an antifungal polyketide that contains a key beta-methoxyacrylate toxophore that targets the complex III of the mitochondrial electron transport chain. Strobilurin biosynthesis begins with construction of benzoyl CoA by step-wise elimination of ammonia from phenylalanine by the phenylalanine ammonia-lyase str11, oxygenation by str8 and retro-Claisen reaction to form benzoic acid, which is activated to its CoA thiolester benzoyl CoA by the dedicated CoA ligase str10. Benzoyl CoA forms the starter unit for the highly reducing polyketide synthase stpks1 that produces the polyketide prestrobilutin A. The FAD-dependent oxygenase str9 then catalyzes the key oxidative rearrangement responsible for the creation of the beta-methoxyacrylate toxophore. Str9 performs epoxidation of the 2,3 olefin of prestrobilutin A, followed by Meinwald rearrangement to furnish the aldehyde intermediate. Rapid enolization of the aldehyde intermediate would give the beta-methoxyacrylate skeleton and methylations catalyzed by str2 and str3 complete the synthesis and lead to the production of strobilurin A. The short-chain dehydrogenase stl2 and the dehydrogenase str4 play a role in the shunt pathway leading to the production of bolineol. The cluster encodes no obvious halogenase gene that could be involved in production of strobilurin B, nor any obvious dimethylallyl-transferase that could be involved in the production of strobilurin G. It is possible that unknown proteins encoded in, or near, the cluster (such as str1 or stl1) may form new classes of halogenases or dimethylally-transferases, or that the responsible genes are located elsewhere on the genome. Similarly, proteins encoded by str5/str6 hydrolases appear to have no chemical role in the biosynthesis of strobilurin A. Finally, no obvious self-resistance gene is found within the cluster. This Strobilurus tenacellus protein is Beta-lactamase-like protein str5.